The chain runs to 187 residues: Ribosome-recycling factor (187 aa).

Belongs to the RRF family.

It localises to the cytoplasm. Its function is as follows. Responsible for the release of ribosomes from messenger RNA at the termination of protein biosynthesis. May increase the efficiency of translation by recycling ribosomes from one round of translation to another. The polypeptide is Ribosome-recycling factor (Ligilactobacillus salivarius (strain UCC118) (Lactobacillus salivarius)).